A 533-amino-acid polypeptide reads, in one-letter code: Calcium-dependent protein kinase 8 (533 aa).

The interval 1 to 21 (MGNCCASPGSETGSKKGKPKI) is disordered. A lipid anchor (N-myristoyl glycine) is attached at Gly2. A Protein kinase domain is found at 57–315 (YDLGREVGRG…AAQVLEHSWI (259 aa)). Residues 63 to 71 (VGRGEFGIT) and Lys86 each bind ATP. Residue Asp181 is the Proton acceptor of the active site. Ser221 carries the phosphoserine modification. Residues 321 to 351 (APNVSLGETVKARLKQFSVMNKLKKRALRVI) are autoinhibitory domain. 4 consecutive EF-hand domains span residues 358 to 394 (EEVA…GQQQ), 395 to 430 (IPDT…LKKM), 431 to 466 (ANDE…EVDT), and 467 to 502 (NSEE…GTDW). Positions 371, 375, 377, 382, 408, 410, 412, 414, 419, 444, 446, 448, 450, 455, 480, 482, 484, and 486 each coordinate Ca(2+). Ser488 bears the Phosphoserine mark. Glu491 contacts Ca(2+). A Phosphoserine modification is found at Ser526.

It belongs to the protein kinase superfamily. Ser/Thr protein kinase family. CDPK subfamily.

The protein resides in the cell membrane. It catalyses the reaction L-seryl-[protein] + ATP = O-phospho-L-seryl-[protein] + ADP + H(+). The catalysed reaction is L-threonyl-[protein] + ATP = O-phospho-L-threonyl-[protein] + ADP + H(+). Its activity is regulated as follows. Activated by calcium. Autophosphorylation may play an important role in the regulation of the kinase activity. Its function is as follows. May play a role in signal transduction pathways that involve calcium as a second messenger. This Arabidopsis thaliana (Mouse-ear cress) protein is Calcium-dependent protein kinase 8 (CPK8).